A 162-amino-acid polypeptide reads, in one-letter code: Ribosome maturation factor RimP (162 aa).

The protein belongs to the RimP family.

It localises to the cytoplasm. Required for maturation of 30S ribosomal subunits. The sequence is that of Ribosome maturation factor RimP from Syntrophotalea carbinolica (strain DSM 2380 / NBRC 103641 / GraBd1) (Pelobacter carbinolicus).